The primary structure comprises 243 residues: MIVIPAIDLKDGQCVRLRQGLMEDTTVFSSNPIEMATQWVEQGARRLHLVDLNGAFEGRPVNSTSITEIVSAFPDLPVQIGGGIRNIKIANTYIEAGVSYLIIGTMAVTDSEFVSELCREFPNKVIVGLDANNGFVATKGWVQKTNLNVVDLSKKFEQDGINSIIYTDIARDGMMQGMNVEAIVNLAKQISIPIIASGGITNIGDIIRLLTEVHFGIMGVITGRAIYEGTLDFKQAQQLCDEN.

The Proton acceptor role is filled by aspartate 8. Aspartate 130 functions as the Proton donor in the catalytic mechanism.

The protein belongs to the HisA/HisF family.

Its subcellular location is the cytoplasm. The enzyme catalyses 1-(5-phospho-beta-D-ribosyl)-5-[(5-phospho-beta-D-ribosylamino)methylideneamino]imidazole-4-carboxamide = 5-[(5-phospho-1-deoxy-D-ribulos-1-ylimino)methylamino]-1-(5-phospho-beta-D-ribosyl)imidazole-4-carboxamide. It functions in the pathway amino-acid biosynthesis; L-histidine biosynthesis; L-histidine from 5-phospho-alpha-D-ribose 1-diphosphate: step 4/9. The chain is 1-(5-phosphoribosyl)-5-[(5-phosphoribosylamino)methylideneamino] imidazole-4-carboxamide isomerase from Vesicomyosocius okutanii subsp. Calyptogena okutanii (strain HA).